We begin with the raw amino-acid sequence, 126 residues long: uncharacterized protein (126 aa).

In terms of domain architecture, VOC spans 4-126 (RIDHTGIMVR…DGEWIEFFQR (123 aa)). A divalent metal cation-binding residues include His7, Glu42, His74, and Glu122.

This sequence belongs to the glyoxalase I family.

This is an uncharacterized protein from Bacillus subtilis (strain 168).